The primary structure comprises 213 residues: Embryo-specific protein ATS3 (213 aa).

The N-terminal stretch at 1–21 (MTFPSLSVSFLFFAFIFVTHA) is a signal peptide. The region spanning 34–148 (CPYTVVVMTS…LNTWYGHNNC (115 aa)) is the PLAT domain. Residues 147 to 188 (NCNTTGRPSSPDLPPPHFPPEFPPETPTTPPPPPPRPSAASR) are disordered. Residue Asn-149 is glycosylated (N-linked (GlcNAc...) asparagine). The segment covering 157-183 (PDLPPPHFPPEFPPETPTTPPPPPPRP) has biased composition (pro residues).

In terms of tissue distribution, expressed in seeds. Expression is restricted to the developing embryo.

The protein localises to the secreted. May play a role during embryo development. This Arabidopsis thaliana (Mouse-ear cress) protein is Embryo-specific protein ATS3.